A 375-amino-acid polypeptide reads, in one-letter code: Probable serine/threonine-protein kinase PBL28 (375 aa).

At Thr-65 the chain carries Phosphothreonine. The region spanning 76–356 (FSDENLLGKG…MDCVKELQLI (281 aa)) is the Protein kinase domain. ATP is bound by residues 82-90 (LGKGGFGRV) and Lys-104. Residue Tyr-152 is modified to Phosphotyrosine. Catalysis depends on Asp-205, which acts as the Proton acceptor. Thr-245 bears the Phosphothreonine mark. Tyr-253 carries the phosphotyrosine modification.

It belongs to the protein kinase superfamily. Ser/Thr protein kinase family.

The protein localises to the cell membrane. The enzyme catalyses L-seryl-[protein] + ATP = O-phospho-L-seryl-[protein] + ADP + H(+). It catalyses the reaction L-threonyl-[protein] + ATP = O-phospho-L-threonyl-[protein] + ADP + H(+). Functionally, may be involved in plant defense signaling. The chain is Probable serine/threonine-protein kinase PBL28 from Arabidopsis thaliana (Mouse-ear cress).